Reading from the N-terminus, the 309-residue chain is Probable manganese-dependent inorganic pyrophosphatase (309 aa).

Residues H9, D13, D15, D75, H97, and D149 each contribute to the Mn(2+) site.

The protein belongs to the PPase class C family. Mn(2+) is required as a cofactor.

The protein resides in the cytoplasm. The catalysed reaction is diphosphate + H2O = 2 phosphate + H(+). The sequence is that of Probable manganese-dependent inorganic pyrophosphatase from Exiguobacterium sp. (strain ATCC BAA-1283 / AT1b).